The sequence spans 325 residues: Glutarate 2-hydroxylase (325 aa).

3 residues coordinate Fe cation: H160, D162, and H292.

The protein belongs to the glutarate hydroxylase family. Homotetramer. Fe(2+) is required as a cofactor.

The catalysed reaction is glutarate + 2-oxoglutarate + O2 = (S)-2-hydroxyglutarate + succinate + CO2. It functions in the pathway amino-acid degradation. Its function is as follows. Acts as an alpha-ketoglutarate-dependent dioxygenase catalyzing hydroxylation of glutarate (GA) to L-2-hydroxyglutarate (L2HG). Functions in a L-lysine degradation pathway that proceeds via cadaverine, glutarate and L-2-hydroxyglutarate. The chain is Glutarate 2-hydroxylase from Escherichia coli O157:H7.